A 258-amino-acid chain; its full sequence is uncharacterized protein (258 aa).

Helical transmembrane passes span 14 to 34 (LAFP…LAAI), 53 to 73 (VIIW…YFFV), 110 to 130 (AALC…WLAL), 185 to 205 (GLAL…GIIF), and 238 to 258 (GINT…AQLI).

This sequence belongs to the TMEM19 family.

It is found in the cell membrane. This is an uncharacterized protein from Synechocystis sp. (strain ATCC 27184 / PCC 6803 / Kazusa).